The following is a 494-amino-acid chain: Transcription termination factor MTERF4, chloroplastic (494 aa).

A chloroplast-targeting transit peptide spans 1–54 (MMKSLLFSAHPTSLLLPAPRLRRLLRLRAASSASASAPPRADRRSPGTPSRRPS). Disordered stretches follow at residues 32–61 (SASA…YARP) and 457–494 (VEEM…EFVR). The span at 46–56 (PGTPSRRPSSS) shows a compositional bias: low complexity. Acidic residues-rich tracts occupy residues 457–466 (VEEMEREDSS) and 473–494 (DEVE…EFVR).

It belongs to the mTERF family.

The protein resides in the plastid. Its subcellular location is the chloroplast stroma. Transcription termination factor required for processing and steady-state levels of plastid transcripts. Required for splicing of the chloroplastic group II intron. Required for the accumulation of 16S and 23S ribosomes. This is Transcription termination factor MTERF4, chloroplastic from Zea mays (Maize).